Consider the following 210-residue polypeptide: Uridine kinase (210 aa).

12-19 (GGSGSGKT) provides a ligand contact to ATP.

The protein belongs to the uridine kinase family.

The protein localises to the cytoplasm. It carries out the reaction uridine + ATP = UMP + ADP + H(+). The catalysed reaction is cytidine + ATP = CMP + ADP + H(+). It participates in pyrimidine metabolism; CTP biosynthesis via salvage pathway; CTP from cytidine: step 1/3. It functions in the pathway pyrimidine metabolism; UMP biosynthesis via salvage pathway; UMP from uridine: step 1/1. This Bacillus pumilus (strain SAFR-032) protein is Uridine kinase.